A 36-amino-acid polypeptide reads, in one-letter code: U14-myrmicitoxin-Tb1a (36 aa).

The signal sequence occupies residues 1–23 (MKIIKLITIFTMMATLMXXVANG). A propeptide spanning residues 24–25 (EP) is cleaved from the precursor. The residue at position 35 (Gln-35) is a Glutamine amide.

As to expression, expressed by the venom gland.

Its subcellular location is the secreted. Its function is as follows. Venom protein with unknown function. Does not induce paralysis when a high dose is administered by intrathoracic injection into the blowfly Lucilia caesar. In Tetramorium bicarinatum (Tramp ant), this protein is U14-myrmicitoxin-Tb1a.